We begin with the raw amino-acid sequence, 87 residues long: Acyl-CoA-binding protein (87 aa).

Serine 2 carries the N-acetylserine modification. The region spanning serine 2–isoleucine 87 is the ACB domain. Lysine 8 carries the post-translational modification N6-acetyllysine; alternate. At lysine 8 the chain carries N6-succinyllysine; alternate. Lysine 14 contacts an acyl-CoA. Lysine 17 carries the N6-succinyllysine modification. Position 19 is an N6-acetyllysine (lysine 19). Phosphotyrosine is present on tyrosine 29. Residues tyrosine 29–lysine 33, lysine 51, lysine 55, and tyrosine 74 each bind an acyl-CoA. Position 51 is an N6-acetyllysine (lysine 51). Lysine 55 bears the N6-acetyllysine; alternate mark. Residue lysine 55 is modified to N6-succinyllysine; alternate. Lysine 55 is subject to N6-(2-hydroxyisobutyryl)lysine; alternate. Lysine 55 bears the N6-malonyllysine; alternate mark. Lysine 77 is modified (N6-acetyllysine; alternate). Lysine 77 is subject to N6-succinyllysine; alternate.

This sequence belongs to the ACBP family. Monomer.

It localises to the endoplasmic reticulum. It is found in the golgi apparatus. Functionally, binds medium- and long-chain acyl-CoA esters with very high affinity and may function as an intracellular carrier of acyl-CoA esters. It is also able to displace diazepam from the benzodiazepine (BZD) recognition site located on the GABA type A receptor. It is therefore possible that this protein also acts as a neuropeptide to modulate the action of the GABA receptor. Its function is as follows. DBI(32-86) has antibacterial properties. The sequence is that of Acyl-CoA-binding protein (DBI) from Sus scrofa (Pig).